We begin with the raw amino-acid sequence, 559 residues long: Urocanate hydratase (559 aa).

NAD(+) is bound by residues 54-55 (GG), glutamine 132, 178-180 (GMG), glutamate 198, arginine 203, 244-245 (NA), 265-269 (QTSAH), 275-276 (YL), and tyrosine 324. Cysteine 412 is a catalytic residue. Glycine 494 provides a ligand contact to NAD(+).

It belongs to the urocanase family. It depends on NAD(+) as a cofactor.

It is found in the cytoplasm. The catalysed reaction is 4-imidazolone-5-propanoate = trans-urocanate + H2O. It functions in the pathway amino-acid degradation; L-histidine degradation into L-glutamate; N-formimidoyl-L-glutamate from L-histidine: step 2/3. Functionally, catalyzes the conversion of urocanate to 4-imidazolone-5-propionate. This is Urocanate hydratase from Azotobacter vinelandii (strain DJ / ATCC BAA-1303).